Reading from the N-terminus, the 952-residue chain is Eukaryotic translation initiation factor 3 subunit A (952 aa).

In terms of domain architecture, PCI spans 315 to 491 (HAERAGIVND…QTITFVSTPP (177 aa)). A coiled-coil region spans residues 522–849 (DAFAAAIAQA…RRQAEKAAAT (328 aa)). A compositionally biased stretch (basic and acidic residues) spans 757–797 (EKVIKRKREEKERKLKEAREAEERKRKEEEEAAQKAEEEAR). Residues 757–952 (EKVIKRKREE…RGMPSTRGGA (196 aa)) form a disordered region. Positions 798 to 809 (AAAALEAEAAAA) are enriched in low complexity. Over residues 810 to 844 (EQRRAEREAQRQSDLERIRAQQEREEEALRRRQAE) the composition is skewed to basic and acidic residues. 2 stretches are compositionally biased toward low complexity: residues 856–878 (RPPA…GGPS) and 893–918 (GAPV…SNGP).

It belongs to the eIF-3 subunit A family. Component of the eukaryotic translation initiation factor 3 (eIF-3) complex.

Its subcellular location is the cytoplasm. RNA-binding component of the eukaryotic translation initiation factor 3 (eIF-3) complex, which is involved in protein synthesis of a specialized repertoire of mRNAs and, together with other initiation factors, stimulates binding of mRNA and methionyl-tRNAi to the 40S ribosome. The eIF-3 complex specifically targets and initiates translation of a subset of mRNAs involved in cell proliferation. The polypeptide is Eukaryotic translation initiation factor 3 subunit A (Cryptococcus neoformans var. neoformans serotype D (strain B-3501A) (Filobasidiella neoformans)).